Here is a 152-residue protein sequence, read N- to C-terminus: Large ribosomal subunit protein bL9 (152 aa).

The tract at residues 41 to 61 (QSAMSQLNAERKAEQRREAEE) is disordered. Residues 49-61 (AERKAEQRREAEE) show a composition bias toward basic and acidic residues.

It belongs to the bacterial ribosomal protein bL9 family.

Functionally, binds to the 23S rRNA. This is Large ribosomal subunit protein bL9 from Levilactobacillus brevis (strain ATCC 367 / BCRC 12310 / CIP 105137 / JCM 1170 / LMG 11437 / NCIMB 947 / NCTC 947) (Lactobacillus brevis).